We begin with the raw amino-acid sequence, 160 residues long: Cytochrome c-type biogenesis protein CcmE (160 aa).

Topologically, residues 1–8 are cytoplasmic; sequence MSAPRKTR. The helical; Signal-anchor for type II membrane protein transmembrane segment at 9–29 threads the bilayer; the sequence is LYAILAVICGAVLTVALTLYA. The Periplasmic segment spans residues 30–160; that stretch reads LSSNIDLFYT…PAAVTEGKRL (131 aa). Positions 130 and 134 each coordinate heme.

This sequence belongs to the CcmE/CycJ family.

Its subcellular location is the cell inner membrane. Heme chaperone required for the biogenesis of c-type cytochromes. Transiently binds heme delivered by CcmC and transfers the heme to apo-cytochromes in a process facilitated by CcmF and CcmH. The sequence is that of Cytochrome c-type biogenesis protein CcmE from Pectobacterium carotovorum subsp. carotovorum (strain PC1).